The primary structure comprises 251 residues: uncharacterized protein (251 aa).

This is an uncharacterized protein from Mycoplasma genitalium (strain ATCC 33530 / DSM 19775 / NCTC 10195 / G37) (Mycoplasmoides genitalium).